The primary structure comprises 76 residues: Demidefensin-3 (76 aa).

An N-terminal signal peptide occupies residues 1–22; the sequence is MRTLALHTAMLLLVALHAQAEA. A propeptide spanning residues 23-64 is cleaved from the precursor; that stretch reads RQARADEAAAQQQPGADDQGMAHSFTWPENAALPLSESERGL. Residues 25–45 are disordered; the sequence is ARADEAAAQQQPGADDQGMAH. The segment covering 30–44 has biased composition (low complexity); it reads AAAQQQPGADDQGMA. Cysteines 68 and 73 form a disulfide. Positions 74-76 are excised as a propeptide; it reads RLL.

This sequence belongs to the alpha-defensin family. Theta subfamily. As to quaternary structure, forms a cyclic homodimer; disulfide-linked. This is a cyclic peptide.

Functionally, has antimicrobial activities against bacteria and fungi. The sequence is that of Demidefensin-3 from Macaca mulatta (Rhesus macaque).